The primary structure comprises 99 residues: Aspartyl/glutamyl-tRNA(Asn/Gln) amidotransferase subunit C (99 aa).

This sequence belongs to the GatC family. In terms of assembly, heterotrimer of A, B and C subunits.

It carries out the reaction L-glutamyl-tRNA(Gln) + L-glutamine + ATP + H2O = L-glutaminyl-tRNA(Gln) + L-glutamate + ADP + phosphate + H(+). The enzyme catalyses L-aspartyl-tRNA(Asn) + L-glutamine + ATP + H2O = L-asparaginyl-tRNA(Asn) + L-glutamate + ADP + phosphate + 2 H(+). In terms of biological role, allows the formation of correctly charged Asn-tRNA(Asn) or Gln-tRNA(Gln) through the transamidation of misacylated Asp-tRNA(Asn) or Glu-tRNA(Gln) in organisms which lack either or both of asparaginyl-tRNA or glutaminyl-tRNA synthetases. The reaction takes place in the presence of glutamine and ATP through an activated phospho-Asp-tRNA(Asn) or phospho-Glu-tRNA(Gln). This is Aspartyl/glutamyl-tRNA(Asn/Gln) amidotransferase subunit C from Corynebacterium glutamicum (strain R).